Here is a 113-residue protein sequence, read N- to C-terminus: Large ribosomal subunit protein bL17 (113 aa).

The protein belongs to the bacterial ribosomal protein bL17 family. As to quaternary structure, part of the 50S ribosomal subunit. Contacts protein L32.

The polypeptide is Large ribosomal subunit protein bL17 (Clostridium botulinum (strain ATCC 19397 / Type A)).